An 817-amino-acid polypeptide reads, in one-letter code: Neurabin-2 (817 aa).

Disordered regions lie at residues 1–52 (MMKT…KYGS) and 64–163 (MGTT…GGDK). 2 actin-binding regions span residues 1–154 (MMKT…FERS) and 164–282 (EAVA…QHRV). Ser-15 carries the post-translational modification Phosphoserine; by MAPK1. Ser-17 is subject to Phosphoserine; by CDK5. The residue at position 94 (Ser-94) is a Phosphoserine; by PKA. Phosphoserine occurs at positions 100 and 116. The interaction with D(2) dopamine receptor stretch occupies residues 100–371 (SLNENVDHSA…LERGVDNGRA (272 aa)). The segment covering 131 to 141 (SAQPAPPPHPP) has biased composition (pro residues). Residues 169–255 (RLLRQERAGL…KRSRVFQPPP (87 aa)) form an interaction with ADRA2A, ADRA2B and ADRA2C region. The residue at position 192 (Ser-192) is a Phosphoserine. Thr-193 carries the phosphothreonine modification. Ser-205 is modified (phosphoserine; by MAPK1). At Thr-207 the chain carries Phosphothreonine. The segment at 216–451 (EKADSRTGLH…DPAPSRKIHF (236 aa)) is disordered. The span at 290–301 (KPREVRKIKPVE) shows a compositional bias: basic and acidic residues. Low complexity-rich tracts occupy residues 332–341 (STPATTASPA) and 399–409 (SGLGEDSGGSA). The segment covering 410-425 (LEEDDEEDEEDGEPPY) has biased composition (acidic residues). Residues 417–494 (DEEDGEPPYE…LEKRVERLEL (78 aa)) form an interaction with protein phosphatase 1 region. Ser-438 is subject to Phosphoserine. The short motif at 447–451 (RKIHF) is the PP1-binding motif element. An interaction with RGS2 region spans residues 480 to 525 (SAEYELEKRVERLELFPVELEKDSEGLGISIIGMGAGADMGLEKLG). A PDZ domain is found at 496–584 (PVELEKDSEG…RVRFMIGRER (89 aa)). Residues 595 to 616 (IQQTLEQERWQREMMEQRYAQY) adopt a coiled-coil conformation. The segment at 595–816 (IQQTLEQERW…NLQTLRNSNS (222 aa)) is interaction with TGN38. At Ser-658 the chain carries Phosphoserine. Residues 665–816 (EKLVHKFKEL…NLQTLRNSNS (152 aa)) adopt a coiled-coil conformation.

As to quaternary structure, possibly exists as a homodimer, homotrimer or a homotetramer. Interacts with F-actin, PPP1CA, neurabin-1, TGN38 and D(2) dopamine receptor. Interacts with RGS1, RGS2, RGS4, RGS19 and ADRA1B, ADRA2A, ADRA2B, ADRA2C, CDKN2A, PPP1R2, RASGFR1 and TIAM1. Interacts (via C-terminus) with SPATA13 (via C-terminal tail). Interacts with DCLK2. Interacts with ADRA2B. Stimulation of D1 (but not D2) dopamine receptors induces Ser-94 phosphorylation. Dephosphorylation of Ser-94 is mediated mainly by PP1 and to a lesser extent by PP2A. Phosphorylation of spinophilin disrupts its association with F-actin, but does not affect its binding to PP1.

Its subcellular location is the cytoplasm. The protein resides in the cytoskeleton. It localises to the nucleus. It is found in the postsynaptic density. The protein localises to the cell junction. Its subcellular location is the adherens junction. The protein resides in the cell projection. It localises to the dendritic spine. It is found in the cell membrane. The protein localises to the lamellipodium. Its subcellular location is the filopodium. The protein resides in the ruffle membrane. Its function is as follows. Seems to act as a scaffold protein in multiple signaling pathways. Modulates excitatory synaptic transmission and dendritic spine morphology. Binds to actin filaments (F-actin) and shows cross-linking activity. Binds along the sides of the F-actin. May play an important role in linking the actin cytoskeleton to the plasma membrane at the synaptic junction. Believed to target protein phosphatase 1/PP1 to dendritic spines, which are rich in F-actin, and regulates its specificity toward ion channels and other substrates, such as AMPA-type and NMDA-type glutamate receptors. Plays a role in regulation of G-protein coupled receptor signaling, including dopamine D2 receptors and alpha-adrenergic receptors. May establish a signaling complex for dopaminergic neurotransmission through D2 receptors by linking receptors downstream signaling molecules and the actin cytoskeleton. Binds to ADRA1B and RGS2 and mediates regulation of ADRA1B signaling. May confer to Rac signaling specificity by binding to both, RacGEFs and Rac effector proteins. Probably regulates p70 S6 kinase activity by forming a complex with TIAM1. Required for hepatocyte growth factor (HGF)-induced cell migration. The chain is Neurabin-2 (Ppp1r9b) from Mus musculus (Mouse).